A 224-amino-acid chain; its full sequence is Viral late gene transcription factor 3 (224 aa).

A zinc finger spans residues 6 to 26 (CSGCRHNGIVSEQGYEYCIFC).

The protein belongs to the orthopoxvirus VLTF-3/OPG127 family. Interacts with the late transcription elongation factor VLTF-4/OPG110. Interacts with the late transcription factors VLTF-1/OPG093.

In terms of biological role, acts with RNA polymerase to initiate transcription from late gene promoters. This chain is Viral late gene transcription factor 3 (OPG127), found in Vaccinia virus (strain Ankara) (VACV).